The sequence spans 428 residues: 3-phosphoshikimate 1-carboxyvinyltransferase (428 aa).

3-phosphoshikimate is bound by residues Lys22, Ser23, and Arg27. Lys22 contacts phosphoenolpyruvate. Positions 96 and 124 each coordinate phosphoenolpyruvate. Positions 169, 170, 171, 197, 313, 336, and 340 each coordinate 3-phosphoshikimate. Phosphoenolpyruvate is bound at residue Gln171. The active-site Proton acceptor is the Asp313. Positions 344, 386, and 411 each coordinate phosphoenolpyruvate.

The protein belongs to the EPSP synthase family. In terms of assembly, monomer.

The protein localises to the cytoplasm. The catalysed reaction is 3-phosphoshikimate + phosphoenolpyruvate = 5-O-(1-carboxyvinyl)-3-phosphoshikimate + phosphate. It participates in metabolic intermediate biosynthesis; chorismate biosynthesis; chorismate from D-erythrose 4-phosphate and phosphoenolpyruvate: step 6/7. Catalyzes the transfer of the enolpyruvyl moiety of phosphoenolpyruvate (PEP) to the 5-hydroxyl of shikimate-3-phosphate (S3P) to produce enolpyruvyl shikimate-3-phosphate and inorganic phosphate. The polypeptide is 3-phosphoshikimate 1-carboxyvinyltransferase (Proteus mirabilis (strain HI4320)).